Here is a 607-residue protein sequence, read N- to C-terminus: UvrABC system protein C (607 aa).

Residues 15–94 form the GIY-YIG domain; sequence ENPGVYLMKN…IKRHRPYFNV (80 aa). A UVR domain is found at 204 to 239; that stretch reads DQVLKLLIRLMNEASARLDYETAALRRDQIASIKEV.

This sequence belongs to the UvrC family. In terms of assembly, interacts with UvrB in an incision complex.

Its subcellular location is the cytoplasm. Its function is as follows. The UvrABC repair system catalyzes the recognition and processing of DNA lesions. UvrC both incises the 5' and 3' sides of the lesion. The N-terminal half is responsible for the 3' incision and the C-terminal half is responsible for the 5' incision. The protein is UvrABC system protein C of Dehalococcoides mccartyi (strain ATCC BAA-2100 / JCM 16839 / KCTC 5957 / BAV1).